A 209-amino-acid chain; its full sequence is Uracil phosphoribosyltransferase (209 aa).

5-phospho-alpha-D-ribose 1-diphosphate contacts are provided by residues Arg-79, Arg-104, and Asp-131–Ser-139. Uracil contacts are provided by residues Ile-194 and Gly-199–Ala-201. Asp-200 provides a ligand contact to 5-phospho-alpha-D-ribose 1-diphosphate.

It belongs to the UPRTase family. The cofactor is Mg(2+).

It carries out the reaction UMP + diphosphate = 5-phospho-alpha-D-ribose 1-diphosphate + uracil. Its pathway is pyrimidine metabolism; UMP biosynthesis via salvage pathway; UMP from uracil: step 1/1. Allosterically activated by GTP. Its function is as follows. Catalyzes the conversion of uracil and 5-phospho-alpha-D-ribose 1-diphosphate (PRPP) to UMP and diphosphate. In Caulobacter vibrioides (strain ATCC 19089 / CIP 103742 / CB 15) (Caulobacter crescentus), this protein is Uracil phosphoribosyltransferase.